The sequence spans 543 residues: Protein male-specific lethal-3 (543 aa).

Residues L10–A90 form the Chromo domain. Positions Q93–I247 are disordered. Basic and acidic residues-rich tracts occupy residues R180–S202, K210–S224, and S234–I247. The 294-residue stretch at Q249–S542 folds into the MRG domain.

Component of the male-specific lethal (MSL) histone acetyltransferase complex, composed of mof, mle, msl-1, msl-2 and msl-3 proteins, as well as roX1 and roX2 non-coding RNAs. In terms of processing, ubiquitinated by msl-2.

The protein localises to the nucleus. It is found in the chromosome. Its function is as follows. Component of the male-specific lethal (MSL) histone acetyltransferase complex, a multiprotein complex essential for elevating transcription of the single X chromosome in the male (X chromosome dosage compensation). The MSL complex specifically associates with the single X chromosome in males and mediates formation of H4K16ac, promoting a two-fold activation of X chromosome. Acts as a histone reader that specifically recognizes and binds histone H3 trimethylated at 'Lys-36' (H3K36me3) and histone H4 monomethylated at 'Lys-20' (H4K20me1). Within the MSL complex, mediates the spreading of the MSL complex from initiation sites on the male X chromosome to flanking chromatin. Following initial recruitment of the MSL complex to male X chromosome by msl-2, msl-3 binds H3K36me3 and promotes spreading of the MSL complex in cis. In addition to its role in dosage compensation in males, promotes germline stem cell differentiation in females: recognizes and binds H3K36me3, promoting recruitment of the ATAC complex and transcription of genes, such as RpS19b. This chain is Protein male-specific lethal-3 (msl-3), found in Drosophila virilis (Fruit fly).